Reading from the N-terminus, the 592-residue chain is A-type ATP synthase subunit A (592 aa).

ATP is bound at residue 233 to 240 (GPFGSGKT).

The protein belongs to the ATPase alpha/beta chains family. In terms of assembly, has multiple subunits with at least A(3), B(3), C, D, E, F, H, I and proteolipid K(x).

The protein localises to the cell membrane. It catalyses the reaction ATP + H2O + 4 H(+)(in) = ADP + phosphate + 5 H(+)(out). Component of the A-type ATP synthase that produces ATP from ADP in the presence of a proton gradient across the membrane. The A chain is the catalytic subunit. The sequence is that of A-type ATP synthase subunit A from Saccharolobus islandicus (strain Y.N.15.51 / Yellowstone #2) (Sulfolobus islandicus).